The primary structure comprises 125 residues: Morphine 6-dehydrogenase (125 aa).

NADP(+)-binding positions include 9–18 (GHSIPVLGFI) and 74–111 (SALG…IERE).

It belongs to the aldo/keto reductase family. Monomer. In terms of processing, the N-terminus is blocked.

Its subcellular location is the cytoplasm. The catalysed reaction is morphine + NAD(+) = morphinone + NADH + H(+). It carries out the reaction morphine + NADP(+) = morphinone + NADPH + H(+). Strongly inhibited by sulfhydryl reagents and quercetin, but not by pyrazole, barbital and indomethacine. Functionally, catalyzes the dehydrogenation of morphine to morphinone. Uses both NAD and NADP, but the activity is much greater with NAD than with NADP. This chain is Morphine 6-dehydrogenase, found in Oryctolagus cuniculus (Rabbit).